Here is a 136-residue protein sequence, read N- to C-terminus: Histone H2A (136 aa).

The span at 1 to 11 shows a compositional bias: gly residues; the sequence is MTGGGKSGGKA. The tract at residues 1 to 24 is disordered; the sequence is MTGGGKSGGKASGSKNAQSRSSKA. N6-acetyllysine is present on residues lysine 6 and lysine 10. Glutamine 107 is modified (N5-methylglutamine). A Phosphoserine modification is found at serine 133. The [ST]-Q motif signature appears at 133–134; the sequence is SQ.

This sequence belongs to the histone H2A family. The nucleosome is a histone octamer containing two molecules each of H2A, H2B, H3 and H4 assembled in one H3-H4 heterotetramer and two H2A-H2B heterodimers. The octamer wraps approximately 147 bp of DNA. In terms of processing, phosphorylated to form H2AS128ph (gamma-H2A) in response to DNA double-strand breaks (DSBs) generated by exogenous genotoxic agents and by stalled replication forks. Phosphorylation is dependent on the DNA damage checkpoint kinases MEC1/ATR and TEL1/ATM, spreads on either side of a detected DSB site and may mark the surrounding chromatin for recruitment of proteins required for DNA damage signaling and repair. Gamma-H2A is removed from the DNA prior to the strand invasion-primer extension step of the repair process and subsequently dephosphorylated. Dephosphorylation is necessary for efficient recovery from the DNA damage checkpoint. Acetylated by ESA1 to form H2AK4ac and H2AK7ac.

The protein localises to the nucleus. Its subcellular location is the chromosome. Its function is as follows. Core component of nucleosome which plays a central role in DNA double strand break (DSB) repair. Nucleosomes wrap and compact DNA into chromatin, limiting DNA accessibility to the cellular machineries which require DNA as a template. Histones thereby play a central role in transcription regulation, DNA repair, DNA replication and chromosomal stability. DNA accessibility is regulated via a complex set of post-translational modifications of histones, also called histone code, and nucleosome remodeling. In Pyricularia oryzae (strain Y34) (Rice blast fungus), this protein is Histone H2A (HTA1).